A 93-amino-acid chain; its full sequence is Small ribosomal subunit protein bS16 (93 aa).

This sequence belongs to the bacterial ribosomal protein bS16 family.

The polypeptide is Small ribosomal subunit protein bS16 (Dictyoglomus turgidum (strain DSM 6724 / Z-1310)).